A 341-amino-acid chain; its full sequence is L-threonine 3-dehydrogenase (341 aa).

C38 provides a ligand contact to Zn(2+). Active-site charge relay system residues include T40 and H43. Residues H63, E64, C93, C96, C99, and C107 each contribute to the Zn(2+) site. Residues I175, D195, R200, 262-264, and 286-287 each bind NAD(+); these read LGI and IY.

Belongs to the zinc-containing alcohol dehydrogenase family. Homotetramer. It depends on Zn(2+) as a cofactor.

Its subcellular location is the cytoplasm. It carries out the reaction L-threonine + NAD(+) = (2S)-2-amino-3-oxobutanoate + NADH + H(+). Its pathway is amino-acid degradation; L-threonine degradation via oxydo-reductase pathway; glycine from L-threonine: step 1/2. Its function is as follows. Catalyzes the NAD(+)-dependent oxidation of L-threonine to 2-amino-3-ketobutyrate. This is L-threonine 3-dehydrogenase from Salmonella arizonae (strain ATCC BAA-731 / CDC346-86 / RSK2980).